The sequence spans 159 residues: Phosphopantetheine adenylyltransferase (159 aa).

Substrate is bound at residue threonine 10. ATP is bound by residues 10–11 and histidine 18; that span reads TF. Substrate contacts are provided by lysine 42, methionine 74, and arginine 88. ATP contacts are provided by residues 89–91, glutamate 99, and 124–130; these read GLR and WSFISSS.

It belongs to the bacterial CoaD family. As to quaternary structure, homohexamer. Requires Mg(2+) as cofactor.

It is found in the cytoplasm. The catalysed reaction is (R)-4'-phosphopantetheine + ATP + H(+) = 3'-dephospho-CoA + diphosphate. The protein operates within cofactor biosynthesis; coenzyme A biosynthesis; CoA from (R)-pantothenate: step 4/5. Reversibly transfers an adenylyl group from ATP to 4'-phosphopantetheine, yielding dephospho-CoA (dPCoA) and pyrophosphate. The protein is Phosphopantetheine adenylyltransferase of Yersinia pestis.